Here is a 236-residue protein sequence, read N- to C-terminus: Peroxisomal membrane protein PMP27 (236 aa).

Belongs to the peroxin-11 family. In terms of assembly, homooligomer. Interacts with PEX34.

It localises to the peroxisome membrane. In terms of biological role, involved in peroxisomal proliferation. Promotes peroxisome division and biogenesis. The polypeptide is Peroxisomal membrane protein PMP27 (PEX11) (Saccharomyces cerevisiae (strain ATCC 204508 / S288c) (Baker's yeast)).